The chain runs to 178 residues: MSRIGNKVITLPAGVELAQNNGVVTVKGPKGELTREFPTAIEIRVEGAEVTLHRPNDSKEMKTIHGTSRANLNNMVVGVSEGFKKELEMRGVGYRAQLAGNKLTLAVGKSHPDEVVAPEGITFEVPTPTQIVVSGINKEVVGQTAAYIRSLRAPEPYKGKGIRYVGEFVRRKEGKTGK.

This sequence belongs to the universal ribosomal protein uL6 family. As to quaternary structure, part of the 50S ribosomal subunit.

In terms of biological role, this protein binds to the 23S rRNA, and is important in its secondary structure. It is located near the subunit interface in the base of the L7/L12 stalk, and near the tRNA binding site of the peptidyltransferase center. The sequence is that of Large ribosomal subunit protein uL6 from Streptococcus suis (strain 05ZYH33).